We begin with the raw amino-acid sequence, 194 residues long: Endonuclease V (194 aa).

Residues aspartate 31 and glutamate 95 each contribute to the Mg(2+) site.

It belongs to the endonuclease V family. Mg(2+) is required as a cofactor.

It is found in the cytoplasm. The enzyme catalyses Endonucleolytic cleavage at apurinic or apyrimidinic sites to products with a 5'-phosphate.. Functionally, DNA repair enzyme involved in the repair of deaminated bases. Selectively cleaves double-stranded DNA at the second phosphodiester bond 3' to a deoxyinosine leaving behind the intact lesion on the nicked DNA. This is Endonuclease V from Pyrococcus abyssi (strain GE5 / Orsay).